A 333-amino-acid polypeptide reads, in one-letter code: Gap junction alpha-4 protein (333 aa).

Topologically, residues 1–20 (MGDWGFLEKLLDQVQEHSTV) are cytoplasmic. A helical membrane pass occupies residues 21-40 (VGKIWLTVLFIFRILILGLA). Residues 41–76 (GESVWGDEQSDFECNTAQPGCTNVCYDQAFPISHIR) are Extracellular-facing. A helical membrane pass occupies residues 77–99 (YWVLQFLFVSTPTLIYLGHVIYL). The Cytoplasmic portion of the chain corresponds to 100–148 (SRREERLRQKEGELRALPSKDLHVERALAAIEHQMAKISVAEDGRLRIR). Residues 149 to 171 (GALMGTYVVSVLCKSVLEAGFLY) form a helical membrane-spanning segment. The Extracellular portion of the chain corresponds to 172–208 (GQWRLYGWTMEPVFVCQRAPCPHIVDCYVSRPTEKTI). Residues 209 to 231 (FIIFMLVVGVISLVLNLLELVHL) form a helical membrane-spanning segment. Topologically, residues 232 to 333 (LCRCVSREIK…NSSASKKQYV (102 aa)) are cytoplasmic. Residues 292-333 (ANLTTEERLTSSRPPPFVNTAPQGGRKSPSRPNSSASKKQYV) form a disordered region. The segment covering 321–333 (SRPNSSASKKQYV) has biased composition (polar residues).

This sequence belongs to the connexin family. Alpha-type (group II) subfamily. In terms of assembly, a connexon is composed of a hexamer of connexins. Highly expressed in lung.

It is found in the cell membrane. The protein localises to the cell junction. The protein resides in the gap junction. In terms of biological role, one gap junction consists of a cluster of closely packed pairs of transmembrane channels, the connexons, through which materials of low MW diffuse from one cell to a neighboring cell. In Mus musculus (Mouse), this protein is Gap junction alpha-4 protein (Gja4).